The primary structure comprises 235 residues: AA9 family lytic polysaccharide monooxygenase D (235 aa).

The signal sequence occupies residues 1 to 18 (MKAFFAVLAVVSAPFVLG). His-19 provides a ligand contact to Cu(2+). Residue Ser-29 is glycosylated (O-linked (Man...) serine). A disulfide bridge connects residues Cys-61 and Cys-181. Cu(2+) is bound at residue His-94. Positions 167 and 176 each coordinate O2. A Cu(2+)-binding site is contributed by Tyr-178. The N-linked (GlcNAc...) asparagine glycan is linked to Asn-221.

It belongs to the polysaccharide monooxygenase AA9 family. Requires Cu(2+) as cofactor.

The protein resides in the secreted. It catalyses the reaction [(1-&gt;4)-beta-D-glucosyl]n+m + reduced acceptor + O2 = 4-dehydro-beta-D-glucosyl-[(1-&gt;4)-beta-D-glucosyl]n-1 + [(1-&gt;4)-beta-D-glucosyl]m + acceptor + H2O.. Functionally, lytic polysaccharide monooxygenase (LPMO) that depolymerizes crystalline and amorphous polysaccharides via the oxidation of scissile alpha- or beta-(1-4)-glycosidic bonds, yielding only C1 oxidation products. Catalysis by LPMOs requires the reduction of the active-site copper from Cu(II) to Cu(I) by a reducing agent and H(2)O(2) or O(2) as a cosubstrate. In Phanerodontia chrysosporium (White-rot fungus), this protein is AA9 family lytic polysaccharide monooxygenase D.